The chain runs to 366 residues: Sodium-potassium/proton antiporter ChaA (366 aa).

At 1-16 the chain is on the cytoplasmic side; the sequence is MSNAQEAVKTRHKETS. The next 2 helical transmembrane spans lie at 17 to 37 and 38 to 58; these read LIFPVLALVVLFLWGSSQTLP and VVIAINLLALIGILSSAFSVV. Over 59–74 the chain is Cytoplasmic; sequence RHADVLAHRLGEPYGS. A helical membrane pass occupies residues 75 to 95; it reads LILSLSVVILEVSLISALMAT. At 96–106 the chain is on the periplasmic side; sequence GDAAPTLMRDT. A helical transmembrane segment spans residues 107-127; sequence LYSIIMIVTGGLVGFSLLLGG. At 128–143 the chain is on the cytoplasmic side; the sequence is RKFATQYMNLFGIKQY. A helical membrane pass occupies residues 144–164; sequence LIALFPLAIIVLVFPMALPAA. The Periplasmic portion of the chain corresponds to 165-167; that stretch reads NFS. Residues 168–188 form a helical membrane-spanning segment; it reads TGQALLVALISAAMYGVFLLI. Topologically, residues 189–216 are cytoplasmic; the sequence is QTKTHQSLFVYEHEDDSDDDDPHHGKPS. A helical transmembrane segment spans residues 217 to 237; it reads AHSSLWHAIWLIIHLIAVIAV. The Periplasmic portion of the chain corresponds to 238 to 255; the sequence is TKMNASSLETLLDSMNAP. The helical transmembrane segment at 256 to 276 threads the bilayer; that stretch reads VAFTGFLVALLILSPEGLGAL. At 277 to 290 the chain is on the cytoplasmic side; that stretch reads KAVLNNQVQRAMNL. A helical transmembrane segment spans residues 291–311; that stretch reads FFGSVLATISLTVPVVTLIAF. The Periplasmic segment spans residues 312–318; it reads MTGNELQ. The helical transmembrane segment at 319 to 339 threads the bilayer; the sequence is FALGAPEMVVMVASLVLCHIS. At 340 to 345 the chain is on the cytoplasmic side; that stretch reads FSTGRT. The chain crosses the membrane as a helical span at residues 346–366; sequence NVLNGAAHLALFAAYLMTIFA.

The protein belongs to the Ca(2+):cation antiporter (CaCA) (TC 2.A.19) family.

The protein resides in the cell inner membrane. The enzyme catalyses Na(+)(in) + H(+)(out) = Na(+)(out) + H(+)(in). The catalysed reaction is K(+)(in) + H(+)(out) = K(+)(out) + H(+)(in). It catalyses the reaction Ca(2+)(in) + H(+)(out) = Ca(2+)(out) + H(+)(in). Pronounced pH dependence with sodium as substrate. Ca(2+)/H(+) and Na(+)/H(+) antiporter activities are both inhibited by magnesium. Ca(2+)/H(+) activity is inhibited by the proton ionophore carbonyl cyanide m-chlorophenylhydrazone (CCCP). In terms of biological role, sodium exporter that functions mainly at alkaline pH. Can also function as a potassium/proton and calcium/proton antiporter at alkaline pH. Does not play a major role in calcium export. The K(+)/H(+) antiporter activity may enable E.coli to adapt to K(+) salinity stress and to maintain K(+) homeostasis. This is Sodium-potassium/proton antiporter ChaA from Escherichia coli (strain K12).